A 349-amino-acid chain; its full sequence is Short-wave-sensitive opsin 1 (349 aa).

Residues 1–34 (MSKMPEEEEFYLFKNISSVGPWDGPQYHIAPVWA) are Extracellular-facing. An N-linked (GlcNAc...) asparagine glycan is attached at Asn-15. The chain crosses the membrane as a helical span at residues 35–59 (FQLQAAFMGIVFLAGLPLNSMVLVA). At 60–71 (TVRYKKLRHPLN) the chain is on the cytoplasmic side. The helical transmembrane segment at 72-97 (YVLVNVSVGGFLLCIFSVLPVFVNSC) threads the bilayer. Residues 98–111 (NGYFVFGRHVCALE) are Extracellular-facing. An intrachain disulfide couples Cys-108 to Cys-185. A helical transmembrane segment spans residues 112-131 (GFLGTVAGLVTGWSLAFLAF). Residues 132-150 (ERYIVICKPFGNFRFSSKH) lie on the Cytoplasmic side of the membrane. Residues 151-174 (ALMVVLTTWTIGIGVSIPPFFGWS) traverse the membrane as a helical segment. Topologically, residues 175–200 (RYIAEGLQCSCGPDWYTVGTKYRSEY) are extracellular. Residues 201–228 (YTWFLFIFCFIVPLSLICFSYAQLLRAL) traverse the membrane as a helical segment. Residues 229 to 250 (KAVAAQQQESATTQKAEREVSR) are Cytoplasmic-facing. A helical membrane pass occupies residues 251-274 (MVVVMVGSFCVCYVPYAALAMYMV). Residues 275–282 (NNRNHGLD) lie on the Extracellular side of the membrane. Residues 283–307 (LRLVSIPAFFSKSSCIYNPIIYCFM) traverse the membrane as a helical segment. N6-(retinylidene)lysine is present on Lys-294. Over 308–349 (NKQFRACIMEMVCGKAMTDESDISSSQKTEVSTVSSSQVGPN) the chain is Cytoplasmic.

This sequence belongs to the G-protein coupled receptor 1 family. Opsin subfamily. Phosphorylated on some or all of the serine and threonine residues present in the C-terminal region.

Its subcellular location is the cell membrane. The protein resides in the photoreceptor inner segment. It is found in the cell projection. The protein localises to the cilium. It localises to the photoreceptor outer segment. Its subcellular location is the cytoplasm. The protein resides in the perinuclear region. Its function is as follows. Visual pigments are the light-absorbing molecules that mediate vision. They consist of an apoprotein, opsin, covalently linked to cis-retinal. Required for the maintenance of cone outer segment organization in the ventral retina, but not essential for the maintenance of functioning cone photoreceptors. Involved in ensuring correct abundance and localization of retinal membrane proteins. May increase spectral sensitivity in dim light. In Saimiri boliviensis boliviensis (Bolivian squirrel monkey), this protein is Short-wave-sensitive opsin 1 (OPN1SW).